The sequence spans 257 residues: Fimbrial assembly protein, serogroup E1 (257 aa).

The protein is Fimbrial assembly protein, serogroup E1 (fimB) of Dichelobacter nodosus (Bacteroides nodosus).